The chain runs to 99 residues: Nucleoid-associated protein LCABL_24440 (99 aa).

This sequence belongs to the YbaB/EbfC family. Homodimer.

Its subcellular location is the cytoplasm. It localises to the nucleoid. Its function is as follows. Binds to DNA and alters its conformation. May be involved in regulation of gene expression, nucleoid organization and DNA protection. The protein is Nucleoid-associated protein LCABL_24440 of Lacticaseibacillus casei (strain BL23) (Lactobacillus casei).